Consider the following 1120-residue polypeptide: Terminal uridylyltransferase 1 (1120 aa).

2 disordered regions span residues 1-156 (MSKY…SAVE) and 196-221 (AALINGDPGPLSSAVSSSSSGSPHTP). Residues 7–16 (LFNQGTKDGT) show a composition bias toward polar residues. Residues 17–59 (NASSGSEANSANITSSSAPASSTNTSSPTSSESAVVSPPASTS) show a composition bias toward low complexity. Residues 60 to 70 (PRRRLIHRRHG) are compositionally biased toward basic residues. The segment covering 90-103 (NEEKHENFISDSVH) has biased composition (basic and acidic residues). Over residues 118-128 (LTTSGSETVMS) the composition is skewed to polar residues. 2 stretches are compositionally biased toward low complexity: residues 134-154 (AFEAPSPPTASASPPLESTSA) and 207-217 (SSAVSSSSSGS). Residues 222–253 (PRLFTCDMCLQYVSTSYEALEQHALDQHGDAL) form a C2H2-type; atypical zinc finger. Residues Cys227, Cys230, His244, and His249 each coordinate Zn(2+). UTP contacts are provided by residues Ser330 and 341–344 (SDID). Mg(2+)-binding residues include Asp342 and Asp344. Residue Arg390 coordinates RNA. Mg(2+) is bound at residue Asp548. UTP contacts are provided by residues 555–559 (GIRNS), Lys580, Lys584, and 598–599 (SY). The PAP-associated domain maps to 659–697 (GELLLGFFYYYAFEFDWVNHVVSLNRPGITTKASLGWDV). Residues 750 to 1120 (GMMASSASAA…ARRVLRLLFR (371 aa)) form an important for catalytic activity and RNA binding region. The short motif at 773–782 (IEDPYEENLN) is the Nucleotide recognition motif (NRM) element. The involved in oligomerization stretch occupies residues 800 to 900 (YRGLLSLLKD…LLSDLEAAFL (101 aa)). The interval 1047–1076 (PSTTTQGEDPLASGTCEQGGVSPSLPTGAP) is disordered.

Belongs to the DNA polymerase type-B-like family. As to quaternary structure, homotetramer. Part of a 700kDa complex. Interacts with p45 and p50 RNA ligases. Mg(2+) serves as cofactor. The cofactor is Mn(2+).

It localises to the mitochondrion. The enzyme catalyses RNA(n) + UTP = RNA(n)-3'-uridine ribonucleotide + diphosphate. Its activity is regulated as follows. Zinc-binding is required for catalytic activity. Terminal uridylyltransferase which is involved in the post-transcriptional editing of mitochondrial RNA, a process involving the addition and deletion of uridine (U) nucleotides in the pre-mRNA. Specifically, catalyzes the addition of Us to the 3'-hydroxyl group of guided RNA (gRNA), with a preference for RNAs terminating in 6 Us, but also can add Us to RNAs terminating in 6 adenines (A), 6 cytosines (C), or 6 guanines (G). Can mediate RNA-independent UTP polymerization in vitro. Can mediate pyrophosphate-dependent degradation of synthetic RNA ending with U residues in vitro. This Leishmania tarentolae (Sauroleishmania tarentolae) protein is Terminal uridylyltransferase 1.